A 272-amino-acid polypeptide reads, in one-letter code: ATP phosphoribosyltransferase regulatory subunit (272 aa).

This sequence belongs to the class-II aminoacyl-tRNA synthetase family. HisZ subfamily. Heteromultimer composed of HisG and HisZ subunits.

The protein resides in the cytoplasm. The protein operates within amino-acid biosynthesis; L-histidine biosynthesis; L-histidine from 5-phospho-alpha-D-ribose 1-diphosphate: step 1/9. Functionally, required for the first step of histidine biosynthesis. May allow the feedback regulation of ATP phosphoribosyltransferase activity by histidine. This Staphylococcus aureus (strain bovine RF122 / ET3-1) protein is ATP phosphoribosyltransferase regulatory subunit.